The primary structure comprises 141 residues: Nucleoside diphosphate kinase (141 aa).

ATP-binding residues include lysine 11, phenylalanine 59, arginine 87, threonine 93, arginine 104, and asparagine 114. The Pros-phosphohistidine intermediate role is filled by histidine 117.

It belongs to the NDK family. In terms of assembly, homotetramer. It depends on Mg(2+) as a cofactor.

The protein localises to the cytoplasm. It carries out the reaction a 2'-deoxyribonucleoside 5'-diphosphate + ATP = a 2'-deoxyribonucleoside 5'-triphosphate + ADP. The enzyme catalyses a ribonucleoside 5'-diphosphate + ATP = a ribonucleoside 5'-triphosphate + ADP. In terms of biological role, major role in the synthesis of nucleoside triphosphates other than ATP. The ATP gamma phosphate is transferred to the NDP beta phosphate via a ping-pong mechanism, using a phosphorylated active-site intermediate. The chain is Nucleoside diphosphate kinase from Bordetella bronchiseptica (strain ATCC BAA-588 / NCTC 13252 / RB50) (Alcaligenes bronchisepticus).